Consider the following 292-residue polypeptide: Probable endonuclease lcl3 (292 aa).

Residues 1–27 are disordered; that stretch reads MRWPPWSSESTNDEQKQTPSSWLSSAA. Residues 17–27 show a composition bias toward polar residues; it reads QTPSSWLSSAA. The chain crosses the membrane as a helical span at residues 45–61; that stretch reads IIPTVVLTSGILIAVRF. One can recognise a TNase-like domain in the interval 83–250; that stretch reads RSIFGQVTSV…KKRARGLWKD (168 aa). Arg134 is a catalytic residue. Residue Asp139 participates in Ca(2+) binding. Active-site residues include Glu142 and Arg182. A disordered region spans residues 257–292; that stretch reads GWESPREYKNRMGMGDPLPIEKGNGKGNGKGKIGQK. A compositionally biased stretch (gly residues) spans 281–292; sequence GKGNGKGKIGQK.

It belongs to the LCL3 family.

It is found in the mitochondrion. The protein localises to the membrane. The chain is Probable endonuclease lcl3 (lcl3) from Penicillium rubens (strain ATCC 28089 / DSM 1075 / NRRL 1951 / Wisconsin 54-1255) (Penicillium chrysogenum).